A 1356-amino-acid chain; its full sequence is Spike glycoprotein (1356 aa).

Positions 1 to 18 are cleaved as a signal peptide; sequence MKLFLILLVLPLASCFFT. S1 stretches follow at residues 16-717 and 19-717; these read FFTC…FYYV and CNSN…FYYV. Over 19-1296 the chain is Virion surface; that stretch reads CNSNANLSML…NRFENYIKWP (1278 aa). Asn-35, Asn-52, and Asn-98 each carry an N-linked (GlcNAc) asparagine; by host glycan. A disulfide bridge connects residues Cys-106 and Cys-126. N-linked (GlcNAc) asparagine; by host glycosylation is present at Asn-155. Cys-175 and Cys-181 form a disulfide bridge. Residues Asn-187 and Asn-193 are each glycosylated (N-linked (GlcNAc) asparagine; by host). Cys-207 and Cys-210 are joined by a disulfide. N-linked (GlcNAc) asparagine; by host glycosylation is found at Asn-240, Asn-276, Asn-301, Asn-330, Asn-354, Asn-358, Asn-403, and Asn-426. Cysteines 259 and 284 form a disulfide. Cys-328 and Cys-351 are disulfide-bonded. An intrachain disulfide couples Cys-438 to Cys-447. A glycan (N-linked (GlcNAc...) asparagine; by host) is linked at Asn-486. The cysteines at positions 497 and 500 are disulfide-linked. An N-linked (GlcNAc) asparagine; by host glycan is attached at Asn-506. Asn-512 carries N-linked (GlcNAc...) asparagine; by host glycosylation. 2 cysteine pairs are disulfide-bonded: Cys-516–Cys-567 and Cys-550–Cys-577. The segment at 598–728 is interaction with host ANPEP; it reads VTWSEGNSIT…NGGNNCTTAV (131 aa). Residues Asn-626, Asn-645, Asn-666, Asn-699, and Asn-723 are each glycosylated (N-linked (GlcNAc) asparagine; by host). A disulfide bridge connects residues Cys-627 and Cys-678. Residues 718 to 1356 are S2; it reads SNGGNNCTTA…YYEFEKVHVQ (639 aa). A disulfide bridge connects residues Cys-724 and Cys-737. Residues Asn-749, Asn-762, and Asn-768 are each glycosylated (N-linked (GlcNAc) asparagine; by host). Intrachain disulfides connect Cys-789–Cys-811, Cys-794–Cys-800, and Cys-896–Cys-907. The segment at 934 to 954 is fusion peptide; the sequence is IGGMVLGGLTSAAAIPFSLAL. The interval 948–1067 is heptad repeat 1 (HR1); the sequence is IPFSLALQAR…QVDRLITGRL (120 aa). The stretch at 1015–1059 forms a coiled coil; it reads QDVVNQQGSALNHLTSQLRHNFQAISNSIQAIYDRLDSIQADQQV. Cys-1098 and Cys-1109 are joined by a disulfide. N-linked (GlcNAc) asparagine; by host glycans are attached at residues Asn-1111, Asn-1196, Asn-1201, Asn-1218, Asn-1242, Asn-1247, and Asn-1277. Residues 1212–1308 form a heptad repeat 2 (HR2) region; sequence PDYVDVNKTL…VWLIISVVFV (97 aa). Positions 1244–1286 form a coiled coil; the sequence is TYLNLSSELKQLEAKTASLFQTTVELQGLIDQINSTYVDLKLL. Residues 1297-1316 form a helical membrane-spanning segment; sequence WWVWLIISVVFVVLLSLLVF. Residues 1317–1356 lie on the Intravirion side of the membrane; the sequence is CCLSTGCCGCCNCLTSSMRGCCDCGSTKLPYYEFEKVHVQ. A KxHxx motif is present at residues 1352–1356; that stretch reads KVHVQ.

The protein belongs to the alphacoronaviruses spike protein family. In terms of assembly, homotrimer. During virus morphogenesis, found in a complex with M proteins. Interacts with host ACE2. Post-translationally, glycosylated by host with heterogeneous N-linked glycans protruding from the trimer surface. Highly glycosylated by host, occluding many regions across the surface of the protein.

Its subcellular location is the virion membrane. The protein localises to the host endoplasmic reticulum-Golgi intermediate compartment membrane. In terms of biological role, S1 region attaches the virion to the cell membrane by interacting with host ACE2, initiating the infection. Binding to the receptor probably induces conformational changes in the S glycoprotein unmasking the fusion peptide and activating membranes fusion. S2 region belongs to the class I viral fusion protein. Under the current model, the protein has at least 3 conformational states: pre-fusion native state, pre-hairpin intermediate state, and post-fusion hairpin state. During viral and target cell membrane fusion, the coiled coil regions (heptad repeats) regions assume a trimer-of-hairpins structure, positioning the fusion peptide in close proximity to the C-terminal region of the ectodomain. The formation of this structure appears to drive apposition and subsequent fusion of viral and target cell membranes. The chain is Spike glycoprotein from Human coronavirus NL63 (HCoV-NL63).